The sequence spans 385 residues: 8-amino-7-oxononanoate synthase (385 aa).

R21 provides a ligand contact to substrate. 108-109 contacts pyridoxal 5'-phosphate; the sequence is GF. A substrate-binding site is contributed by H133. S179, H207, and T233 together coordinate pyridoxal 5'-phosphate. K236 is subject to N6-(pyridoxal phosphate)lysine. Position 352 (T352) interacts with substrate.

Belongs to the class-II pyridoxal-phosphate-dependent aminotransferase family. BioF subfamily. As to quaternary structure, homodimer. Requires pyridoxal 5'-phosphate as cofactor.

The enzyme catalyses 6-carboxyhexanoyl-[ACP] + L-alanine + H(+) = (8S)-8-amino-7-oxononanoate + holo-[ACP] + CO2. Its pathway is cofactor biosynthesis; biotin biosynthesis. In terms of biological role, catalyzes the decarboxylative condensation of pimeloyl-[acyl-carrier protein] and L-alanine to produce 8-amino-7-oxononanoate (AON), [acyl-carrier protein], and carbon dioxide. This chain is 8-amino-7-oxononanoate synthase, found in Klebsiella pneumoniae subsp. pneumoniae (strain ATCC 700721 / MGH 78578).